Reading from the N-terminus, the 37-residue chain is Cytochrome b6-f complex subunit 7 (37 aa).

The chain crosses the membrane as a helical span at residues 5–25 (IFGTAFLFIVLVPVGLALGAF).

The protein belongs to the PetM family. As to quaternary structure, the 4 large subunits of the cytochrome b6-f complex are cytochrome b6, subunit IV (17 kDa polypeptide, PetD), cytochrome f and the Rieske protein, while the 4 small subunits are PetG, PetL, PetM and PetN. The complex functions as a dimer.

Its subcellular location is the cellular thylakoid membrane. Its function is as follows. Component of the cytochrome b6-f complex, which mediates electron transfer between photosystem II (PSII) and photosystem I (PSI), cyclic electron flow around PSI, and state transitions. This chain is Cytochrome b6-f complex subunit 7, found in Synechococcus elongatus (strain ATCC 33912 / PCC 7942 / FACHB-805) (Anacystis nidulans R2).